The chain runs to 129 residues: Small ribosomal subunit protein uS11 (129 aa).

The protein belongs to the universal ribosomal protein uS11 family. In terms of assembly, part of the 30S ribosomal subunit. Interacts with proteins S7 and S18. Binds to IF-3.

Located on the platform of the 30S subunit, it bridges several disparate RNA helices of the 16S rRNA. Forms part of the Shine-Dalgarno cleft in the 70S ribosome. This Aliivibrio fischeri (strain ATCC 700601 / ES114) (Vibrio fischeri) protein is Small ribosomal subunit protein uS11.